The chain runs to 415 residues: tRNA(Met) cytidine acetate ligase (415 aa).

ATP-binding positions include 7-20 (VVEY…HRYH), glycine 101, asparagine 162, and 187-188 (RI).

It belongs to the TmcAL family.

Its subcellular location is the cytoplasm. It catalyses the reaction cytidine(34) in elongator tRNA(Met) + acetate + ATP = N(4)-acetylcytidine(34) in elongator tRNA(Met) + AMP + diphosphate. Its function is as follows. Catalyzes the formation of N(4)-acetylcytidine (ac(4)C) at the wobble position of elongator tRNA(Met), using acetate and ATP as substrates. First activates an acetate ion to form acetyladenylate (Ac-AMP) and then transfers the acetyl group to tRNA to form ac(4)C34. In Bacillus velezensis (strain DSM 23117 / BGSC 10A6 / LMG 26770 / FZB42) (Bacillus amyloliquefaciens subsp. plantarum), this protein is tRNA(Met) cytidine acetate ligase.